A 194-amino-acid chain; its full sequence is Peptidyl-tRNA hydrolase (194 aa).

Tyr17 lines the tRNA pocket. Catalysis depends on His22, which acts as the Proton acceptor. Positions 68, 70, and 116 each coordinate tRNA.

The protein belongs to the PTH family. As to quaternary structure, monomer.

The protein resides in the cytoplasm. The catalysed reaction is an N-acyl-L-alpha-aminoacyl-tRNA + H2O = an N-acyl-L-amino acid + a tRNA + H(+). Functionally, hydrolyzes ribosome-free peptidyl-tRNAs (with 1 or more amino acids incorporated), which drop off the ribosome during protein synthesis, or as a result of ribosome stalling. Its function is as follows. Catalyzes the release of premature peptidyl moieties from peptidyl-tRNA molecules trapped in stalled 50S ribosomal subunits, and thus maintains levels of free tRNAs and 50S ribosomes. This is Peptidyl-tRNA hydrolase from Histophilus somni (strain 2336) (Haemophilus somnus).